A 622-amino-acid chain; its full sequence is Dehydrogenase mpl7 (622 aa).

FAD-binding positions include 23-24 (TA), 44-45 (EA), and 102-105 (NFMS). The active-site Proton acceptor is the H554. Residues A582 and 593–594 (IM) each bind FAD.

This sequence belongs to the GMC oxidoreductase family. As to quaternary structure, homodimer. FAD serves as cofactor.

It participates in mycotoxin biosynthesis. In terms of biological role, dehydrogenase; part of the gene cluster that mediates the biosynthesis of the mycotoxin citrinin, a hepato-nephrotoxic compound to humans due to inhibition of respiration complex III. The pathway begins with the synthesis of a keto-aldehyde intermediate by the citrinin PKS (pksCT) from successive condensations of 4 malonyl-CoA units, presumably with a simple acetyl-CoA starter unit. Release of the keto-aldehyde intermediate is consistent with the presence of the C-terminal reductive release domain. Mp11 collaborates with pksCT by catalyzing the hydrolysis of ACP-bound acyl intermediates to free the ACP from stalled intermediates. Mpl2 then catalyzes the oxidation of the C-12 methyl of the ketone intermediate to an alcohol intermediate which is further oxidized by the oxidoreductase mpl7 to produce a bisaldehyde intermediate. The fourth catalytic step is catalyzed by the mpl4 aldehyde dehydrogenase. The final transformation is the reduction of C-3 by mpl6 to provide the chemically stable citrinin nucleus. This chain is Dehydrogenase mpl7, found in Monascus purpureus (Red mold).